The sequence spans 359 residues: Phosphoserine aminotransferase (359 aa).

Arg41 contributes to the L-glutamate binding site. Pyridoxal 5'-phosphate-binding positions include 75–76 (AS), Trp101, Thr152, Asp171, and Gln194. The residue at position 195 (Lys195) is an N6-(pyridoxal phosphate)lysine. A pyridoxal 5'-phosphate-binding site is contributed by 236-237 (NT).

This sequence belongs to the class-V pyridoxal-phosphate-dependent aminotransferase family. SerC subfamily. In terms of assembly, homodimer. Requires pyridoxal 5'-phosphate as cofactor.

It localises to the cytoplasm. It catalyses the reaction O-phospho-L-serine + 2-oxoglutarate = 3-phosphooxypyruvate + L-glutamate. The catalysed reaction is 4-(phosphooxy)-L-threonine + 2-oxoglutarate = (R)-3-hydroxy-2-oxo-4-phosphooxybutanoate + L-glutamate. The protein operates within amino-acid biosynthesis; L-serine biosynthesis; L-serine from 3-phospho-D-glycerate: step 2/3. It participates in cofactor biosynthesis; pyridoxine 5'-phosphate biosynthesis; pyridoxine 5'-phosphate from D-erythrose 4-phosphate: step 3/5. Functionally, catalyzes the reversible conversion of 3-phosphohydroxypyruvate to phosphoserine and of 3-hydroxy-2-oxo-4-phosphonooxybutanoate to phosphohydroxythreonine. The sequence is that of Phosphoserine aminotransferase from Acinetobacter baylyi (strain ATCC 33305 / BD413 / ADP1).